The following is a 515-amino-acid chain: Na(+)/H(+) antiporter NhaB (515 aa).

11 helical membrane-spanning segments follow: residues 23–43, 45–65, 96–116, 136–156, 204–224, 245–265, 305–325, 349–369, 393–413, 449–469, and 480–500; these read LAII…NPFV, GWLL…CYPL, VVLL…LLLF, CLAS…AVVI, LMMH…VGEP, APIT…VEHF, ALIG…VGLI, FEEA…VAVI, LFYL…VGTV, ATPN…SPLI, and ALPY…FLLI.

It belongs to the NhaB Na(+)/H(+) (TC 2.A.34) antiporter family.

Its subcellular location is the cell inner membrane. It carries out the reaction 2 Na(+)(in) + 3 H(+)(out) = 2 Na(+)(out) + 3 H(+)(in). Na(+)/H(+) antiporter that extrudes sodium in exchange for external protons. This Photorhabdus laumondii subsp. laumondii (strain DSM 15139 / CIP 105565 / TT01) (Photorhabdus luminescens subsp. laumondii) protein is Na(+)/H(+) antiporter NhaB.